Here is a 202-residue protein sequence, read N- to C-terminus: Ras-related protein RABD2b (202 aa).

GTP is bound by residues 15–23, 33–40, 63–67, 121–124, and 151–153; these read GDSGVGKSC, YLDSYIST, DTAGQ, NKND, and SAK. Positions 37-45 match the Effector region motif; that stretch reads YISTIGVDF. The segment at 174–202 is disordered; the sequence is ASQPAGGAKPPTVQIRGQPVNQQSGCCSS. Polar residues predominate over residues 192–202; sequence PVNQQSGCCSS. Residues C199 and C200 are each lipidated (S-geranylgeranyl cysteine).

It belongs to the small GTPase superfamily. Rab family.

The protein localises to the golgi apparatus. Its subcellular location is the trans-Golgi network membrane. The protein resides in the golgi apparatus membrane. In terms of biological role, protein transport. Regulator of membrane traffic from the Golgi apparatus towards the endoplasmic reticulum (ER). This Arabidopsis thaliana (Mouse-ear cress) protein is Ras-related protein RABD2b (RABD2B).